We begin with the raw amino-acid sequence, 519 residues long: Probable cytosol aminopeptidase (519 aa).

Mn(2+) is bound by residues lysine 283 and aspartate 288. The active site involves lysine 295. Aspartate 306, aspartate 365, and glutamate 367 together coordinate Mn(2+). Arginine 369 is a catalytic residue.

Belongs to the peptidase M17 family. Mn(2+) is required as a cofactor.

Its subcellular location is the cytoplasm. It carries out the reaction Release of an N-terminal amino acid, Xaa-|-Yaa-, in which Xaa is preferably Leu, but may be other amino acids including Pro although not Arg or Lys, and Yaa may be Pro. Amino acid amides and methyl esters are also readily hydrolyzed, but rates on arylamides are exceedingly low.. It catalyses the reaction Release of an N-terminal amino acid, preferentially leucine, but not glutamic or aspartic acids.. In terms of biological role, presumably involved in the processing and regular turnover of intracellular proteins. Catalyzes the removal of unsubstituted N-terminal amino acids from various peptides. The polypeptide is Probable cytosol aminopeptidase (Mycobacterium marinum (strain ATCC BAA-535 / M)).